Consider the following 178-residue polypeptide: ATP synthase subunit b (178 aa).

Residues 11-31 (IIPEPVEIVVGLVAFLLLLFV) form a helical membrane-spanning segment.

This sequence belongs to the ATPase B chain family. In terms of assembly, F-type ATPases have 2 components, F(1) - the catalytic core - and F(0) - the membrane proton channel. F(1) has five subunits: alpha(3), beta(3), gamma(1), delta(1), epsilon(1). F(0) has three main subunits: a(1), b(2) and c(10-14). The alpha and beta chains form an alternating ring which encloses part of the gamma chain. F(1) is attached to F(0) by a central stalk formed by the gamma and epsilon chains, while a peripheral stalk is formed by the delta and b chains.

Its subcellular location is the cell membrane. Functionally, f(1)F(0) ATP synthase produces ATP from ADP in the presence of a proton or sodium gradient. F-type ATPases consist of two structural domains, F(1) containing the extramembraneous catalytic core and F(0) containing the membrane proton channel, linked together by a central stalk and a peripheral stalk. During catalysis, ATP synthesis in the catalytic domain of F(1) is coupled via a rotary mechanism of the central stalk subunits to proton translocation. Component of the F(0) channel, it forms part of the peripheral stalk, linking F(1) to F(0). This chain is ATP synthase subunit b, found in Saccharopolyspora erythraea (strain ATCC 11635 / DSM 40517 / JCM 4748 / NBRC 13426 / NCIMB 8594 / NRRL 2338).